Consider the following 199-residue polypeptide: ATP-dependent Clp protease proteolytic subunit 3 (199 aa).

Ser101 functions as the Nucleophile in the catalytic mechanism. The active site involves His126.

Belongs to the peptidase S14 family. As to quaternary structure, fourteen ClpP subunits assemble into 2 heptameric rings which stack back to back to give a disk-like structure with a central cavity, resembling the structure of eukaryotic proteasomes.

It is found in the cytoplasm. The catalysed reaction is Hydrolysis of proteins to small peptides in the presence of ATP and magnesium. alpha-casein is the usual test substrate. In the absence of ATP, only oligopeptides shorter than five residues are hydrolyzed (such as succinyl-Leu-Tyr-|-NHMec, and Leu-Tyr-Leu-|-Tyr-Trp, in which cleavage of the -Tyr-|-Leu- and -Tyr-|-Trp bonds also occurs).. Cleaves peptides in various proteins in a process that requires ATP hydrolysis. Has a chymotrypsin-like activity. Plays a major role in the degradation of misfolded proteins. The sequence is that of ATP-dependent Clp protease proteolytic subunit 3 from Synechococcus elongatus (strain ATCC 33912 / PCC 7942 / FACHB-805) (Anacystis nidulans R2).